The chain runs to 154 residues: Jupiter microtubule associated homolog 1 (154 aa).

Met-1 is modified (N-acetylmethionine). The segment covering 1 to 19 has biased composition (polar residues); sequence MTTTTTFKGVDPNSRNSSR. The disordered stretch occupies residues 1–154; the sequence is MTTTTTFKGV…PGGKSSLVLG (154 aa). Thr-2 is subject to N-acetylthreonine; in Hematological and neurological expressed 1 protein, N-terminally processed. A phosphoserine mark is found at Ser-28 and Ser-31. The residue at position 54 (Thr-54) is a Phosphothreonine. Ser-71, Ser-80, Ser-87, Ser-88, and Ser-92 each carry phosphoserine. A compositionally biased stretch (polar residues) spans 80 to 91; it reads SGPQRRNSSEAN. The segment covering 96 to 108 has biased composition (basic and acidic residues); the sequence is LDLKGEGDVHENV. Residues 125 to 138 show a composition bias toward pro residues; it reads PAAPVPSPVAPAPV. Ser-131 is subject to Phosphoserine. An N6-acetyllysine modification is found at Lys-148.

Belongs to the JUPITER family. Interacts with the complex composed, at least, of APC, CTNNB1 and GSK3B; the interaction takes place with the inactive form of GSK3B (phosphorylated at 'Ser-9').

It localises to the nucleus. The protein resides in the cytoplasm. Its function is as follows. Modulates negatively AKT-mediated GSK3B signaling. Induces CTNNB1 'Ser-33' phosphorylation and degradation through the suppression of the inhibitory 'Ser-9' phosphorylation of GSK3B, which represses the function of the APC:CTNNB1:GSK3B complex and the interaction with CDH1/E-cadherin in adherent junctions. Plays a role in the regulation of cell cycle and cell adhesion. Has an inhibitory role on AR-signaling pathway through the induction of receptor proteasomal degradation. The protein is Jupiter microtubule associated homolog 1 of Bos taurus (Bovine).